A 158-amino-acid polypeptide reads, in one-letter code: Transcription elongation factor GreA (158 aa).

Belongs to the GreA/GreB family.

In terms of biological role, necessary for efficient RNA polymerase transcription elongation past template-encoded arresting sites. The arresting sites in DNA have the property of trapping a certain fraction of elongating RNA polymerases that pass through, resulting in locked ternary complexes. Cleavage of the nascent transcript by cleavage factors such as GreA or GreB allows the resumption of elongation from the new 3'terminus. GreA releases sequences of 2 to 3 nucleotides. This Pelagibacter ubique (strain HTCC1062) protein is Transcription elongation factor GreA.